The sequence spans 258 residues: Imidazole glycerol phosphate synthase subunit HisF (258 aa).

Residues Asp-12 and Asp-131 contribute to the active site.

The protein belongs to the HisA/HisF family. As to quaternary structure, heterodimer of HisH and HisF.

The protein localises to the cytoplasm. The catalysed reaction is 5-[(5-phospho-1-deoxy-D-ribulos-1-ylimino)methylamino]-1-(5-phospho-beta-D-ribosyl)imidazole-4-carboxamide + L-glutamine = D-erythro-1-(imidazol-4-yl)glycerol 3-phosphate + 5-amino-1-(5-phospho-beta-D-ribosyl)imidazole-4-carboxamide + L-glutamate + H(+). It participates in amino-acid biosynthesis; L-histidine biosynthesis; L-histidine from 5-phospho-alpha-D-ribose 1-diphosphate: step 5/9. Functionally, IGPS catalyzes the conversion of PRFAR and glutamine to IGP, AICAR and glutamate. The HisF subunit catalyzes the cyclization activity that produces IGP and AICAR from PRFAR using the ammonia provided by the HisH subunit. The polypeptide is Imidazole glycerol phosphate synthase subunit HisF (Sinorhizobium medicae (strain WSM419) (Ensifer medicae)).